The primary structure comprises 471 residues: Tryptophanase (471 aa).

N6-acetyllysine is present on residues Lys5, Lys115, and Lys156. Lys270 bears the N6-(pyridoxal phosphate)lysine mark. Lys450 is modified (N6-acetyllysine).

The protein belongs to the beta-eliminating lyase family. In terms of assembly, homotetramer. Pyridoxal 5'-phosphate serves as cofactor.

It carries out the reaction L-tryptophan + H2O = indole + pyruvate + NH4(+). The protein operates within amino-acid degradation; L-tryptophan degradation via pyruvate pathway; indole and pyruvate from L-tryptophan: step 1/1. The sequence is that of Tryptophanase from Escherichia coli O6:H1 (strain CFT073 / ATCC 700928 / UPEC).